The sequence spans 395 residues: Mitogen-activated protein kinase 6 (395 aa).

The disordered stretch occupies residues 1-35 (MDGGSGQPAADTEMTEAPGGFPAAAPSPQMPGIEN). Residues 17–27 (APGGFPAAAPS) show a composition bias toward low complexity. Positions 63–348 (KPPIMPIGKG…VLDALAHPYL (286 aa)) constitute a Protein kinase domain. Residues 69–77 (IGKGAYGIV) and Lys-92 contribute to the ATP site. Asp-189 serves as the catalytic Proton acceptor. Position 221 is a phosphothreonine (Thr-221). Residues 221–223 (TEY) carry the TXY motif. Phosphotyrosine is present on Tyr-223. Thr-226 bears the Phosphothreonine mark.

Belongs to the protein kinase superfamily. CMGC Ser/Thr protein kinase family. MAP kinase subfamily. Interacts with MEKK1, MKK1 and MKK2. May form a ternary complex with MEKK1 and MKK1 or MKK2. Interacts with NDPK2, AP2C1, MKP1 and PTP1. Interacts with DSPTP1B/MKP2, especially during HR-like responses triggered by fungal elicitors. Interacts with MKK4, MKK5 and MKK6. Binds to LIP5. Interacts with VQ4 and IKU1/VQ14. Interacts with RACK1A, RACK1B and RACK1C. Interacts with PTP1. Interacts with FLZ9. Binds to BASL and YDA. In terms of processing, dually phosphorylated on Thr-221 and Tyr-223, which activates the enzyme. Dephosphorylated by DSPTP1B/MKP2.

It localises to the cytoplasm. The protein localises to the nucleus. Its subcellular location is the cell cortex. It carries out the reaction L-seryl-[protein] + ATP = O-phospho-L-seryl-[protein] + ADP + H(+). The catalysed reaction is L-threonyl-[protein] + ATP = O-phospho-L-threonyl-[protein] + ADP + H(+). Its activity is regulated as follows. Activated by threonine and tyrosine phosphorylation. Activated by the MAP kinase kinases MKK2, MKK3, MKK4, MKK5, MKK7 and MKK9. Activated in response to touch, wounding, low temperature, low humidity, salt stress, hydrogen peroxide, ozone, ACC (an ethylene precursor), jasmonic acid (JA), mastoparan and UVC. Activated in response to elicitors: oligogalacturonides, hexameric chitin fragments, fungal xylanase, and the bacterial flagellin and harpin. Activated upon Pseudomonas syringae pv. tomato DC3000 infection. Repressed by the protein phosphatase 2C AP2C1 and the protein-tyrosine-phosphatases MKP1 and PTP1. Repressed by DSPTP1B/MKP2-mediated dephosphorylation. Activated by polarized BASL. Triggered by MKKK20 in response to various abiotic stresses, including osmotic stress, cold and reactive oxygen species (ROS). Activated by MKK5 in response to abscisic acid (ABA). In terms of biological role, mitogen-activated protein kinase (MAPK) which regulates abscisic acid (ABA) responses in a MAPKKK20-MKK5-MPK6 cascade involved in root growth (e.g. root cell division and elongation) and stomatal response. Involved in oxidative stress-mediated signaling cascade (such as ozone). Involved in the innate immune MAP kinase signaling cascade (MEKK1, MKK4/MKK5 and MPK3/MPK6) downstream of bacterial flagellin receptor FLS2. May be involved in hypersensitive response (HR)-mediated signaling cascade by modulating LIP5 phosphorylation and subsequent multivesicular bodies (MVBs) trafficking. May phosphorylate regulators of WRKY transcription factors. Phosphorylates 1-aminocyclopropane-1-carboxylic acid synthases (ACS2 and ACS6) and may be involved in the regulation of bacterial elicitor flagellin-induced ethylene production. Regulates locally gene-mediated and basal resistance response to certain pathogens. May be involved in the cold and salinity stress-mediated MAP kinase signaling cascade (MEKK1, MKK1/MKK2 and MPK4/MPK6). MKK1-MPK6 module mediates abscisic acid (ABA)-dependent CAT1 expression with H(2)O(2) production and response to drought and salt stress. MKK1-MPK6 module is also involved in sugar signaling during the process of seed germination. MKK3-MPK6 module plays an important role in the jasmonate signal transduction pathway through the negative regulation of MYC2/JIN1 expression. MKK9-MPK3/MPK6 module phosphorylates and activates EIN3, leading to the promotion of EIN3-mediated transcription in ethylene signaling. MPK3/MPK6 cascade regulates camalexin synthesis through transcriptional regulation of the biosynthetic genes after pathogen infection. MKK9-MPK6 module positively regulates leaf senescence. YDA-MKK4/MKK5-MPK3/MPK6 module regulates stomatal cell fate before the guard mother cell (GMC) is specified. When activated, reinforces the feedback loop by phosphorylating BASL, and inhibits stomatal fate by phosphorylating SPCH. This MAPK cascade also functions downstream of the ER receptor in regulating coordinated local cell proliferation, which shapes the morphology of plant organs. This is Mitogen-activated protein kinase 6 from Arabidopsis thaliana (Mouse-ear cress).